A 355-amino-acid chain; its full sequence is DNA polymerase IV (355 aa).

A UmuC domain is found at 4–185; that stretch reads IIHVDMDCFY…LPLKKIPGVG (182 aa). Aspartate 8 and aspartate 103 together coordinate Mg(2+). Residue glutamate 104 is part of the active site.

The protein belongs to the DNA polymerase type-Y family. In terms of assembly, monomer. The cofactor is Mg(2+).

The protein localises to the cytoplasm. The catalysed reaction is DNA(n) + a 2'-deoxyribonucleoside 5'-triphosphate = DNA(n+1) + diphosphate. Poorly processive, error-prone DNA polymerase involved in untargeted mutagenesis. Copies undamaged DNA at stalled replication forks, which arise in vivo from mismatched or misaligned primer ends. These misaligned primers can be extended by PolIV. Exhibits no 3'-5' exonuclease (proofreading) activity. May be involved in translesional synthesis, in conjunction with the beta clamp from PolIII. The protein is DNA polymerase IV of Pasteurella multocida (strain Pm70).